The primary structure comprises 396 residues: 2-methyl-aconitate isomerase (396 aa).

Substrate is bound by residues serine 19 and 66 to 70 (SSTSK). The Proton donor/acceptor role is filled by cysteine 104. Position 104 is a cysteine sulfinic acid (-SO2H) (cysteine 104). Substrate-binding residues include asparagine 106, lysine 278, serine 309, and histidine 314. Methionine 318 acts as the Proton donor/acceptor in catalysis. Glycine 319 provides a ligand contact to substrate.

This sequence belongs to the PrpF family. Homodimer.

It carries out the reaction 2-methyl-trans-aconitate = 2-methyl-cis-aconitate. It participates in organic acid metabolism; propanoate degradation. Catalyzes the isomerization of 2-methyl-trans-aconitate to yield 2-methyl-cis-aconitate through a base-catalyzed proton abstraction coupled with a rotation about C2-C3 bond of 2-methyl-aconitate. This is 2-methyl-aconitate isomerase from Cupriavidus necator (Alcaligenes eutrophus).